The following is a 317-amino-acid chain: uncharacterized protein (317 aa).

The chain crosses the membrane as a helical span at residues 11 to 31; sequence ALLLVIFGSLIVSFAIFFMVL. 3 PASTA domains span residues 33 to 100, 101 to 174, and 180 to 241; these read NNEI…FISK, GAII…LISK, and DKHV…TIAK.

It localises to the membrane. This is an uncharacterized protein from Borreliella burgdorferi (strain ATCC 35210 / DSM 4680 / CIP 102532 / B31) (Borrelia burgdorferi).